We begin with the raw amino-acid sequence, 336 residues long: Dihydroorotate dehydrogenase (quinone) (336 aa).

FMN contacts are provided by residues 62–66 and T86; that span reads AGLDK. Residue K66 coordinates substrate. 111-115 is a substrate binding site; it reads NRMGF. FMN is bound by residues N139 and N172. A substrate-binding site is contributed by N172. The active-site Nucleophile is S175. N177 provides a ligand contact to substrate. Residues K217 and T245 each coordinate FMN. 246–247 contacts substrate; sequence NT. FMN-binding positions include G268, G297, and 318–319; that span reads YS.

It belongs to the dihydroorotate dehydrogenase family. Type 2 subfamily. As to quaternary structure, monomer. Requires FMN as cofactor.

Its subcellular location is the cell membrane. The enzyme catalyses (S)-dihydroorotate + a quinone = orotate + a quinol. Its pathway is pyrimidine metabolism; UMP biosynthesis via de novo pathway; orotate from (S)-dihydroorotate (quinone route): step 1/1. Functionally, catalyzes the conversion of dihydroorotate to orotate with quinone as electron acceptor. The protein is Dihydroorotate dehydrogenase (quinone) of Cronobacter sakazakii (strain ATCC BAA-894) (Enterobacter sakazakii).